Here is a 449-residue protein sequence, read N- to C-terminus: MDKISGFSDDELLVKILSFLPFKFAITTSVLSKQWKFLWMRVPKLEYDEDSMYSFEYSFRYFLPKAKEVDSETYSIVSESGHRMRSFIEKNLPLHSSPVIESLRLKFFTEVFQPEDIKLWVEIAVSRCAQELSVDFFPKEKHNALLPRNLYTCKSLVTLKLRNNILVDVPHVFSLPSLKILHLERVTYGDGESLQRLLSNCSVLEDLVVELDTGDNVRKLDVIIPSLLSLSFGMSRYCAYEGYRIDTPSLKYFKLTDLSKTFSGLIENMPKLEEANITARHNFKKLLELVTSVKRLSLNIENNDAEALTAIYGDDIVFNELEHLNFHIHNAYWSELLYWLLKASPKLQNLEFDEQCSRDGTMGTLAVFWNQPNSVPQCLLSTLQTFEWSGYPGSVQGKDLATYILRKSRQLKIATISIGYGLDPQQKLKMEMDVKFSFRASPTCKRVFY.

The region spanning 2-50 (DKISGFSDDELLVKILSFLPFKFAITTSVLSKQWKFLWMRVPKLEYDED) is the F-box domain. 6 LRR repeats span residues 27–52 (TTSVLSKQWKFLWMRVPKLEYDEDSM), 81–107 (GHRMRSFIEKNLPLHSSPVIESLRLKF), 158–185 (TLKLRNNILVDVPHVFSLPSLKILHLER), 186–211 (VTYGDGESLQRLLSNCSVLEDLVVEL), 252–279 (YFKLTDLSKTFSGLIENMPKLEEANITA), and 328–354 (IHNAYWSELLYWLLKASPKLQNLEFDE). Positions 368-418 (FWNQPNSVPQCLLSTLQTFEWSGYPGSVQGKDLATYILRKSRQLKIATISI) constitute an FBD domain.

This is Putative F-box/FBD/LRR-repeat protein At5g62970 from Arabidopsis thaliana (Mouse-ear cress).